Consider the following 1171-residue polypeptide: ATP-dependent helicase/deoxyribonuclease subunit B (1171 aa).

Residues 1-343 (MSLRFVIGRA…LVAEENYRYR (343 aa)) form the UvrD-like helicase ATP-binding domain. 8 to 15 (GRAGSGKS) provides a ligand contact to ATP. In terms of domain architecture, UvrD-like helicase C-terminal spans 281-587 (MEQPRFHSPA…QFANIPPSLD (307 aa)). [4Fe-4S] cluster is bound by residues Cys-805, Cys-1129, Cys-1132, and Cys-1138.

This sequence belongs to the helicase family. AddB/RexB type 1 subfamily. In terms of assembly, heterodimer of AddA and AddB. Mg(2+) is required as a cofactor. The cofactor is [4Fe-4S] cluster.

In terms of biological role, the heterodimer acts as both an ATP-dependent DNA helicase and an ATP-dependent, dual-direction single-stranded exonuclease. Recognizes the chi site generating a DNA molecule suitable for the initiation of homologous recombination. The AddB subunit has 5' -&gt; 3' nuclease activity but not helicase activity. This Bacillus thuringiensis (strain Al Hakam) protein is ATP-dependent helicase/deoxyribonuclease subunit B.